The following is a 716-amino-acid chain: ATP-dependent zinc metalloprotease FTSH 1, chloroplastic (716 aa).

Residues 1 to 48 (MASNSLLRSSSNFFLGSHIIISSPTPKTTRKPSFPFSFVSRAKYQITR) constitute a chloroplast transit peptide. The transit peptide at 49 to 86 (SSQDENSPNGKPNSPFSSQVALAAILLSSISSSPLALA) directs the protein to the thylakoid. A helical membrane pass occupies residues 204–224 (FTVIGNLIFPLLAFGGLFLLF). An ATP-binding site is contributed by 302–309 (GPPGTGKT). H524 is a binding site for Zn(2+). E525 is a catalytic residue. H528 and D605 together coordinate Zn(2+).

This sequence in the N-terminal section; belongs to the AAA ATPase family. In the C-terminal section; belongs to the peptidase M41 family. In terms of assembly, interacts with CHIP and HSP70. Heterohexamers with FTSH2, FTSH5 and FTSH8. Requires Zn(2+) as cofactor. In terms of processing, the FTSH1 precursor is ubiquitinated by CHIP in the cytoplasm. Ubiquitous.

It localises to the plastid. Its subcellular location is the chloroplast thylakoid membrane. Its function is as follows. Part of a complex that function as an ATP-dependent zinc metallopeptidase. Involved in the thylakoid formation and in the removal of damaged D1 in the photosystem II, preventing cell death under high-intensity light conditions. This chain is ATP-dependent zinc metalloprotease FTSH 1, chloroplastic (FTSH1), found in Arabidopsis thaliana (Mouse-ear cress).